The sequence spans 130 residues: Small ribosomal subunit protein uS9 (130 aa).

The protein belongs to the universal ribosomal protein uS9 family.

This Geotalea daltonii (strain DSM 22248 / JCM 15807 / FRC-32) (Geobacter daltonii) protein is Small ribosomal subunit protein uS9.